The sequence spans 188 residues: tRNA(Phe) 7-((3-amino-3-carboxypropyl)-4-demethylwyosine(37)-N(4))-methyltransferase (188 aa).

It belongs to the TYW3 family.

It catalyses the reaction 4-demethyl-7-[(3S)-3-amino-3-carboxypropyl]wyosine(37) in tRNA(Phe) + S-adenosyl-L-methionine = 7-[(3S)-3-amino-3-carboxypropyl]wyosine(37) in tRNA(Phe) + S-adenosyl-L-homocysteine + H(+). In terms of biological role, S-adenosyl-L-methionine-dependent methyltransferase that acts as a component of the wyosine derivatives biosynthesis pathway. Probably methylates N-4 position of wybutosine-86 to produce wybutosine-72. The protein is tRNA(Phe) 7-((3-amino-3-carboxypropyl)-4-demethylwyosine(37)-N(4))-methyltransferase of Aeropyrum pernix (strain ATCC 700893 / DSM 11879 / JCM 9820 / NBRC 100138 / K1).